We begin with the raw amino-acid sequence, 209 residues long: Probable phosphatase C1687.21 (209 aa).

Catalysis depends on H8, which acts as the Tele-phosphohistidine intermediate. The active-site Proton donor/acceptor is the E82.

Belongs to the phosphoglycerate mutase family. BPG-dependent PGAM subfamily.

The protein localises to the cytoplasm. The protein resides in the nucleus. The protein is Probable phosphatase C1687.21 of Schizosaccharomyces pombe (strain 972 / ATCC 24843) (Fission yeast).